A 672-amino-acid chain; its full sequence is Transcriptional regulator Kaiso (672 aa).

The segment at 1 to 103 (MESRKLISAT…RSDLLDELIK (103 aa)) is interaction with NCOR1. The tract at residues 1-136 (MESRKLISAT…SGTAQDGNTE (136 aa)) is self-association. The BTB domain occupies 32–94 (CDVTVIVEDR…IYSSKIVRVR (63 aa)). Residues K151 and K153 each participate in a glycyl lysine isopeptide (Lys-Gly) (interchain with G-Cter in SUMO2) cross-link. At T251 the chain carries Phosphothreonine. Positions 298–573 (LPNHMPSSIN…FMSSHIKSVH (276 aa)) are interaction with CBFA2T3. A disordered region spans residues 325–354 (KANEEEEEEIIDDDDDTISSSPDSAVSNTS). Over residues 328 to 341 (EEEEEEIIDDDDDT) the composition is skewed to acidic residues. Glycyl lysine isopeptide (Lys-Gly) (interchain with G-Cter in SUMO2) cross-links involve residues K390, K407, K414, K449, K465, K474, and K479. The tract at residues 454–672 (EGEARLENEI…EFEFIIPESY (219 aa)) is interaction with CTNND1. The Nuclear localization signal motif lies at 471–480 (MANKRMKVKH). 3 consecutive C2H2-type zinc fingers follow at residues 494–516 (YICIVCKRSYVCLTSLRRHFNIH), 522–544 (YPCRYCEKVFPLAEYRTKHEIHH), and 550–573 (YQCLACGKSFINYQFMSSHIKSVH). A required for DNA-binding region spans residues 514–638 (NIHSWEKKYP…TTTSTQNKPM (125 aa)). Residues K539, K570, K582, K611, and K618 each participate in a glycyl lysine isopeptide (Lys-Gly) (interchain with G-Cter in SUMO2) cross-link. The interval 616 to 635 (GYKVDTGKEPPVGTTTSTQN) is disordered.

As to quaternary structure, self-associates. Interacts with CTNND2. Interacts with CTNND1, and this interaction inhibits binding to both methylated and non-methylated DNA. Interacts with NCOR1. Interacts with KPNA2/RCH1, which may mediate nuclear import of this protein. Interacts with CBFA2T3. In terms of tissue distribution, expressed in vascular endothelium.

Its subcellular location is the nucleus. The protein localises to the cytoplasm. In terms of biological role, transcriptional regulator with bimodal DNA-binding specificity. Binds to methylated CpG dinucleotides in the consensus sequence 5'-CGCG-3' and also binds to the non-methylated consensus sequence 5'-CTGCNA-3' also known as the consensus kaiso binding site (KBS). Recruits the N-CoR repressor complex to promote histone deacetylation and the formation of repressive chromatin structures in target gene promoters. May contribute to the repression of target genes of the Wnt signaling pathway. May also activate transcription of a subset of target genes by the recruitment of CTNND2. Represses expression of MMP7 in conjunction with transcriptional corepressors CBFA2T3, CBFA2T2 and RUNX1T1. This is Transcriptional regulator Kaiso (ZBTB33) from Homo sapiens (Human).